A 677-amino-acid polypeptide reads, in one-letter code: Probable sulfate transporter 4.2 (677 aa).

Residues 1–83 (MSLAVKDLST…RTYRWHQYFK (83 aa)) are Cytoplasmic-facing. A helical membrane pass occupies residues 84–104 (LDLMAGITVGIMLVPQAMSYA). The Extracellular portion of the chain corresponds to 105–108 (RLAG). A helical transmembrane segment spans residues 109–129 (LQPIYGLYSSFVPVFVYAVFG). The Cytoplasmic portion of the chain corresponds to 130–133 (SSRQ). A helical membrane pass occupies residues 134–154 (LAVGPVALVSLLVSNALSGIV). Residues 155–161 (DPSEELY) are Extracellular-facing. A helical membrane pass occupies residues 162-182 (TELAILLALMVGIFESIMGFL). At 183–189 (RLGWLIR) the chain is on the cytoplasmic side. Residues 190–210 (FISHSVISGFTTASAVVIGLS) traverse the membrane as a helical segment. The Extracellular portion of the chain corresponds to 211–241 (QLKYFLGYSVSRSSKIMPVIDSIIAGADQFK). A helical membrane pass occupies residues 242–262 (WPPFLLGCTILVILLVMKHVG). Over 263–269 (KAKKELR) the chain is Cytoplasmic. A helical membrane pass occupies residues 270 to 290 (FIRAAGPLTGLALGTIIAKVF). Residues 291–318 (HPPSITLVGDIPQGLPKFSFPKSFDHAK) lie on the Extracellular side of the membrane. The helical transmembrane segment at 319 to 339 (LLLPTSALITGVAILESVGIA) threads the bilayer. The Cytoplasmic portion of the chain corresponds to 340-355 (KALAAKNRYELDSNSE). The chain crosses the membrane as a helical span at residues 356–376 (LFGLGVANIFGSLFSAYPTTG). The Extracellular portion of the chain corresponds to 377-392 (SFSRSAVNSESEAKTG). Residues 393 to 413 (LSGLVTGIIIGCSLLFLTPMF) form a helical membrane-spanning segment. Topologically, residues 414-420 (KFIPQCA) are cytoplasmic. The chain crosses the membrane as a helical span at residues 421–441 (LAAIVISAVSGLVDYEGAIFL). The Extracellular portion of the chain corresponds to 442–459 (WRVDKRDFTLWTITSTTT). A helical membrane pass occupies residues 460–480 (LFFGIEIGVLIGVGFSLAFVI). The Cytoplasmic segment spans residues 481–677 (HESANPHIAV…LEEPLLSREK (197 aa)). Residues 505 to 629 (QYPEAYTYNG…VRVHDAVQVC (125 aa)) form the STAS domain.

It belongs to the SLC26A/SulP transporter (TC 2.A.53) family.

It localises to the membrane. Its function is as follows. H(+)/sulfate cotransporter that may play a role in the regulation of sulfate assimilation. The chain is Probable sulfate transporter 4.2 (SULTR4;2) from Arabidopsis thaliana (Mouse-ear cress).